The sequence spans 103 residues: Large ribosomal subunit protein uL24 (103 aa).

It belongs to the universal ribosomal protein uL24 family. Part of the 50S ribosomal subunit.

One of two assembly initiator proteins, it binds directly to the 5'-end of the 23S rRNA, where it nucleates assembly of the 50S subunit. Functionally, one of the proteins that surrounds the polypeptide exit tunnel on the outside of the subunit. The polypeptide is Large ribosomal subunit protein uL24 (Halalkalibacterium halodurans (strain ATCC BAA-125 / DSM 18197 / FERM 7344 / JCM 9153 / C-125) (Bacillus halodurans)).